A 197-amino-acid chain; its full sequence is Phosphoheptose isomerase (197 aa).

The region spanning 34-196 is the SIS domain; sequence MVHCLLGGNK…DRTLFPQDEQ (163 aa). 49 to 51 contacts substrate; the sequence is NGG. Residues histidine 58 and glutamate 62 each contribute to the Zn(2+) site. Substrate-binding positions include glutamate 62, 91–92, 117–119, serine 122, and glutamine 172; these read ND and STS. Residues glutamine 172 and histidine 180 each contribute to the Zn(2+) site.

It belongs to the SIS family. GmhA subfamily. As to quaternary structure, homotetramer. Zn(2+) is required as a cofactor.

It localises to the cytoplasm. The enzyme catalyses 2 D-sedoheptulose 7-phosphate = D-glycero-alpha-D-manno-heptose 7-phosphate + D-glycero-beta-D-manno-heptose 7-phosphate. It functions in the pathway carbohydrate biosynthesis; D-glycero-D-manno-heptose 7-phosphate biosynthesis; D-glycero-alpha-D-manno-heptose 7-phosphate and D-glycero-beta-D-manno-heptose 7-phosphate from sedoheptulose 7-phosphate: step 1/1. Its function is as follows. Catalyzes the isomerization of sedoheptulose 7-phosphate in D-glycero-D-manno-heptose 7-phosphate. The chain is Phosphoheptose isomerase from Shewanella sp. (strain W3-18-1).